The chain runs to 1020 residues: Sodium/potassium-transporting ATPase subunit alpha-2 (1020 aa).

A propeptide spanning residues 1-5 (MGRGA) is cleaved from the precursor. Residues 1–31 (MGRGAGREYSPAATTAENGGGKKKQKEKELD) are disordered. Topologically, residues 6–85 (GREYSPAATT…NALTPPPTTP (80 aa)) are cytoplasmic. At Ser-10 the chain carries Phosphoserine. Residues 80-82 (PPP) form an interaction with phosphoinositide-3 kinase region. A helical membrane pass occupies residues 86 to 106 (EWVKFCRQLFGGFSILLWIGA). Topologically, residues 107-129 (LLCFLAYGILAAMEDEPSNDNLY) are extracellular. A helical membrane pass occupies residues 130–150 (LGIVLAAVVIVTGCFSYYQEA). Topologically, residues 151 to 286 (KSSKIMDSFK…VGQTPIAMEI (136 aa)) are cytoplasmic. Positions 212-227 (DNSSLTGESEPQTRSP) are enriched in polar residues. The tract at residues 212 to 231 (DNSSLTGESEPQTRSPEFTH) is disordered. A helical transmembrane segment spans residues 287–306 (EHFIQLITGVAVFLGVSFFV). Residues 307 to 318 (LSLILGYSWLEA) lie on the Extracellular side of the membrane. The helical transmembrane segment at 319–336 (VIFLIGIIVANVPEGLLA) threads the bilayer. The Cytoplasmic segment spans residues 337 to 769 (TVTVCLTLTA…EEGRLIFDNL (433 aa)). Residue Asp-374 is the 4-aspartylphosphate intermediate of the active site. Phosphoserine is present on residues Ser-439, Ser-450, Ser-496, and Ser-559. Thr-570 carries the post-translational modification Phosphothreonine. 2 positions are modified to phosphoserine: Ser-587 and Ser-672. Residues Asp-714 and Asp-718 each contribute to the Mg(2+) site. Residues 770–789 (KKSIAYTLTSNIPEITPFLL) traverse the membrane as a helical segment. Residues 790 to 799 (FIIANIPLPL) lie on the Extracellular side of the membrane. A helical transmembrane segment spans residues 800-820 (GTVTILCIDLGTDMVPAISLA). Residues 821–840 (YEAAESDIMKRQPRNSQTDK) are Cytoplasmic-facing. Ser-826 is subject to Phosphoserine. A helical transmembrane segment spans residues 841-863 (LVNERLISMAYGQIGMIQALGGF). Topologically, residues 864-915 (FTYFVILAENGFLPSRLLGIRLDWDDRTTNDLEDSYGQEWTYEQRKVVEFTC) are extracellular. The chain crosses the membrane as a helical span at residues 916–935 (HTAFFASIVVVQWADLIICK). Topologically, residues 936–948 (TRRNSVFQQGMKN) are cytoplasmic. A Phosphoserine; by PKA modification is found at Ser-940. The chain crosses the membrane as a helical span at residues 949–967 (KILIFGLLEETALAAFLSY). At 968-982 (CPGMGVALRMYPLKV) the chain is on the extracellular side. A helical membrane pass occupies residues 983–1003 (TWWFCAFPYSLLIFIYDEVRK). The Cytoplasmic segment spans residues 1004-1020 (LILRRYPGGWVEKETYY).

Belongs to the cation transport ATPase (P-type) (TC 3.A.3) family. Type IIC subfamily. As to quaternary structure, the sodium/potassium-transporting ATPase is composed of a catalytic alpha subunit, an auxiliary non-catalytic beta subunit and an additional regulatory subunit. Interacts with regulatory subunit FXYD1.

It localises to the membrane. The protein resides in the cell membrane. The catalysed reaction is K(+)(out) + Na(+)(in) + ATP + H2O = K(+)(in) + Na(+)(out) + ADP + phosphate + H(+). This is the catalytic component of the active enzyme, which catalyzes the hydrolysis of ATP coupled with the exchange of sodium and potassium ions across the plasma membrane. This action creates the electrochemical gradient of sodium and potassium ions, providing the energy for active transport of various nutrients. The sequence is that of Sodium/potassium-transporting ATPase subunit alpha-2 (Atp1a2) from Mus musculus (Mouse).